Reading from the N-terminus, the 254-residue chain is 3-deoxy-manno-octulosonate cytidylyltransferase (254 aa).

The protein belongs to the KdsB family.

Its subcellular location is the cytoplasm. The catalysed reaction is 3-deoxy-alpha-D-manno-oct-2-ulosonate + CTP = CMP-3-deoxy-beta-D-manno-octulosonate + diphosphate. It functions in the pathway nucleotide-sugar biosynthesis; CMP-3-deoxy-D-manno-octulosonate biosynthesis; CMP-3-deoxy-D-manno-octulosonate from 3-deoxy-D-manno-octulosonate and CTP: step 1/1. It participates in bacterial outer membrane biogenesis; lipopolysaccharide biosynthesis. In terms of biological role, activates KDO (a required 8-carbon sugar) for incorporation into bacterial lipopolysaccharide in Gram-negative bacteria. The chain is 3-deoxy-manno-octulosonate cytidylyltransferase from Chlamydia trachomatis serovar L2 (strain ATCC VR-902B / DSM 19102 / 434/Bu).